Here is a 402-residue protein sequence, read N- to C-terminus: Zinc finger CCCH domain-containing protein 35 (402 aa).

2 consecutive C3H1-type zinc fingers follow at residues Cys117–Phe144 and Arg152–Asp176. Disordered stretches follow at residues Val180 to Tyr211 and Ser232 to Gly258. Positions Pro183–Pro192 are enriched in polar residues. Over residues Ser232–Pro241 the composition is skewed to low complexity. Positions Pro242–Ser253 are enriched in pro residues.

The protein is Zinc finger CCCH domain-containing protein 35 of Oryza sativa subsp. japonica (Rice).